Here is a 138-residue protein sequence, read N- to C-terminus: Translation initiation factor 5A (138 aa).

Residue K37 is modified to Hypusine.

Belongs to the eIF-5A family.

Its subcellular location is the cytoplasm. In terms of biological role, functions by promoting the formation of the first peptide bond. The protein is Translation initiation factor 5A of Pyrococcus furiosus (strain ATCC 43587 / DSM 3638 / JCM 8422 / Vc1).